We begin with the raw amino-acid sequence, 344 residues long: Nicotinate-nucleotide--dimethylbenzimidazole phosphoribosyltransferase (344 aa).

Catalysis depends on Glu310, which acts as the Proton acceptor.

The protein belongs to the CobT family.

It catalyses the reaction 5,6-dimethylbenzimidazole + nicotinate beta-D-ribonucleotide = alpha-ribazole 5'-phosphate + nicotinate + H(+). The protein operates within nucleoside biosynthesis; alpha-ribazole biosynthesis; alpha-ribazole from 5,6-dimethylbenzimidazole: step 1/2. In terms of biological role, catalyzes the synthesis of alpha-ribazole-5'-phosphate from nicotinate mononucleotide (NAMN) and 5,6-dimethylbenzimidazole (DMB). The chain is Nicotinate-nucleotide--dimethylbenzimidazole phosphoribosyltransferase from Chromobacterium violaceum (strain ATCC 12472 / DSM 30191 / JCM 1249 / CCUG 213 / NBRC 12614 / NCIMB 9131 / NCTC 9757 / MK).